A 447-amino-acid chain; its full sequence is ATP-dependent 6-phosphofructokinase (447 aa).

ATP contacts are provided by residues G88, 154 to 155 (RG), and 179 to 182 (GDGT). D180 contacts Mg(2+). Substrate-binding positions include 208 to 210 (TVD), 253 to 255 (MGR), E315, and 368 to 371 (YIIR). D210 acts as the Proton acceptor in catalysis.

This sequence belongs to the phosphofructokinase type A (PFKA) family. PPi-dependent PFK group II subfamily. Atypical ATP-dependent clade 'X' sub-subfamily. In terms of assembly, homodimer. Requires Mg(2+) as cofactor.

The protein resides in the cytoplasm. It carries out the reaction beta-D-fructose 6-phosphate + ATP = beta-D-fructose 1,6-bisphosphate + ADP + H(+). The protein operates within carbohydrate degradation; glycolysis; D-glyceraldehyde 3-phosphate and glycerone phosphate from D-glucose: step 3/4. Its function is as follows. Catalyzes the phosphorylation of D-fructose 6-phosphate to fructose 1,6-bisphosphate by ATP, the first committing step of glycolysis. In Borreliella burgdorferi (strain ATCC 35210 / DSM 4680 / CIP 102532 / B31) (Borrelia burgdorferi), this protein is ATP-dependent 6-phosphofructokinase.